The following is a 135-amino-acid chain: M-zodatoxin-Lt8q (135 aa).

The first 20 residues, 1–20, serve as a signal peptide directing secretion; sequence MKYFVVALALVAAFACIAES. A propeptide spanning residues 21 to 60 is cleaved from the precursor; sequence KPAESEHELAEVEEENELADLEDAVWLEHLADLSDLEEAR.

Belongs to the cationic peptide 06 (cytoinsectotoxin) family. As to expression, expressed by the venom gland.

It localises to the secreted. Insecticidal, cytolytic and antimicrobial peptide. Forms voltage-dependent, ion-permeable channels in membranes. At high concentration causes cell membrane lysis. The sequence is that of M-zodatoxin-Lt8q (cit 1-16) from Lachesana tarabaevi (Spider).